Consider the following 879-residue polypeptide: Levansucrase (879 aa).

The signal sequence occupies residues 1 to 37 (MTKEHKKMYKAGKYWAVATLVSASILMEVGVTTHADA). Repeat copies occupy residues 66 to 81 (DNAT…SIAN), 82 to 97 (DNAT…SIAN), 98 to 113 (DNAT…SIAN), 114 to 129 (DNAT…SVAN), 130 to 145 (DNAT…SVAN), 146 to 161 (DNAT…SVAN), and 162 to 177 (DNAT…SVAN). The 7 X 16 AA tandem repeats of D-N-A-T-S-G-S-T-K-Q-E-S-S-[IV]-A-N stretch occupies residues 66–177 (DNATSGSTKQ…STKQESSVAN (112 aa)). Polar residues-rich tracts occupy residues 66 to 180 (DNAT…NDTK) and 189 to 213 (NTSN…AATQ). Residues 66–213 (DNATSGSTKQ…NNEQPSAATQ (148 aa)) form a disordered region. 3 residues coordinate sucrose: W311, D312, and S382. D312 serves as the catalytic Nucleophile. A Ca(2+)-binding site is contributed by D460. The sucrose site is built by R465 and D466. The Ca(2+) site is built by Q491, L528, N530, and D562. E563 lines the sucrose pocket. Catalysis depends on E565, which acts as the Proton donor/acceptor. R583 lines the sucrose pocket. The segment at 743–830 (SSGLGLKPHQ…TPAKPVQAGQ (88 aa)) is disordered. Positions 754-821 (VNPSQPTTPA…KPVNPSQPTT (68 aa)) are enriched in polar residues. The LPXTG sorting signal signature appears at 841 to 845 (LPQTG). T844 carries the post-translational modification Pentaglycyl murein peptidoglycan amidated threonine. A propeptide spans 845-879 (GENNSQSQTMSFIGILLAMFGSLLGFLGIKKRRND) (removed by sortase).

It belongs to the glycosyl hydrolase 68 family.

It localises to the secreted. The protein localises to the cell wall. It catalyses the reaction [6)-beta-D-fructofuranosyl-(2-&gt;](n) alpha-D-glucopyranoside + sucrose = [6)-beta-D-fructofuranosyl-(2-&gt;](n+1) alpha-D-glucopyranoside + D-glucose. Ca(2+) may play an important structural role and promote stability of levansucrase. Fructosyltransferase that catalyzes the polymerization of the fructose moiety of sucrose to produce levan polymer and the fructo-oligosaccharide (FOS) 1-kestose. Also displays sucrose hydrolase activity. This Fructilactobacillus sanfranciscensis (Lactobacillus sanfranciscensis) protein is Levansucrase.